The sequence spans 628 residues: U-box domain-containing protein 10 (628 aa).

A U-box domain is found at 242-316 (TIPEDFLCPI…SQWCTKHNIE (75 aa)). ARM repeat units lie at residues 373–413 (TDNR…NLSI), 415–454 (EHNKELIMLAGAVTSIVLVLRAGSMEARENAAATLFSLSL), 456–495 (DENKIIIGASGAIMALVDLLQYGSVRGKKDAATALFNLCI), 497–537 (QGNK…VLAS), and 539–578 (QVAKTAILRANAIPPLIDCLQKDQPRNRENAAAILLCLCK).

The catalysed reaction is S-ubiquitinyl-[E2 ubiquitin-conjugating enzyme]-L-cysteine + [acceptor protein]-L-lysine = [E2 ubiquitin-conjugating enzyme]-L-cysteine + N(6)-ubiquitinyl-[acceptor protein]-L-lysine.. It participates in protein modification; protein ubiquitination. Functions as an E3 ubiquitin ligase. The chain is U-box domain-containing protein 10 (PUB10) from Arabidopsis thaliana (Mouse-ear cress).